Consider the following 507-residue polypeptide: Maturase K (507 aa).

This sequence belongs to the intron maturase 2 family. MatK subfamily.

The protein resides in the plastid. The protein localises to the chloroplast. Its function is as follows. Usually encoded in the trnK tRNA gene intron. Probably assists in splicing its own and other chloroplast group II introns. This Lens ervoides (Beaded lentil) protein is Maturase K.